Reading from the N-terminus, the 1200-residue chain is Metabotropic glycine receptor (1200 aa).

A signal peptide spans 1–24; it reads MGAMAYSLLFCLLLAHLGLGEVGA. Residues 25–62 form a disordered region; the sequence is SLDPPGRPDSPRERTPRGKQHGQQLPRASAPDPSIPWS. Topologically, residues 25-417 are extracellular; it reads SLDPPGRPDS…CFVQEDKYLR (393 aa). Residues 85-281 form a cache-like region region; it reads YLYTGDFHQL…CENGSYKPGW (197 aa). Residues Asn-98 and Asn-143 are each glycosylated (N-linked (GlcNAc...) asparagine). A disulfide bridge connects residues Cys-99 and Cys-272. Residues Ser-172 and Arg-173 each contribute to the glycine site. A glycan (N-linked (GlcNAc...) asparagine) is linked at Asn-215. Residues 234-253 are disordered; sequence LHRRGSNQGPRGLGHSWRRR. Glu-271 is a glycine binding site. Residue Asn-274 is glycosylated (N-linked (GlcNAc...) asparagine). Glycine is bound at residue Asp-307. A glycan (N-linked (GlcNAc...) asparagine) is linked at Asn-333. The chain crosses the membrane as a helical span at residues 418–439; it reads LAIISFQALCMLLDFVSMLVVY. At 440–451 the chain is on the cytoplasmic side; that stretch reads HFRKAKSIRASG. Residues 452 to 474 form a helical membrane-spanning segment; the sequence is LILLETILFGSLLLYFPVVILYF. The Extracellular portion of the chain corresponds to 475 to 478; it reads EPST. Residues 479–501 traverse the membrane as a helical segment; that stretch reads FRCILLRWARLLGFATVYGTVTL. Cys-481 and Cys-573 are disulfide-bonded. The Cytoplasmic portion of the chain corresponds to 502–525; the sequence is KLHRVLKVFLSRTAQRIPYMTGGR. The helical transmembrane segment at 526 to 547 threads the bilayer; that stretch reads VMRMLAVIVLVVFWFLVGWTSS. The Extracellular segment spans residues 548-576; it reads MCQNLERDILLVGQGQTSDHLTFNMCLID. Residues 577-597 form a helical membrane-spanning segment; that stretch reads RWDYMTAVAEFLFLLWGIYLC. Residues 598–611 are Cytoplasmic-facing; it reads YAVRTVPSAFHEPR. The chain crosses the membrane as a helical span at residues 612–633; that stretch reads YMAVAVHNELIITAIFHTIRFV. At 634 to 642 the chain is on the extracellular side; sequence LASRLQPDW. Residues 643–664 traverse the membrane as a helical segment; that stretch reads MLMLYFAHAHLTVTVTIGLLLI. The Cytoplasmic portion of the chain corresponds to 665–1200; it reads PKFSHSSNNP…SANKIPGPQK (536 aa). 3 positions are modified to phosphoserine: Ser-694, Ser-705, and Ser-708. The interval 757-875 is disordered; that stretch reads RITEIPETVS…EAESTESVPL (119 aa). 2 stretches are compositionally biased toward basic and acidic residues: residues 769-781 and 819-828; these read CSKEDKEGTDHSA and STYDHVRDQT. A Glycyl lysine isopeptide (Lys-Gly) (interchain with G-Cter in ubiquitin) cross-link involves residue Lys-774. The segment covering 845–856 has biased composition (low complexity); sequence ENSTLESLSSKK. Residues Ser-865 and Ser-944 each carry the phosphoserine modification. Residues 947–988 are disordered; the sequence is DNVETIPNSGHMEEPRKPQKSGIMKQQRVSLPTANPDVSSGI. Positions 973–988 are enriched in polar residues; it reads QRVSLPTANPDVSSGI. A VCPWE motif 1 motif is present at residues 1000–1004; the sequence is VCPWE. Phosphoserine is present on Ser-1059. Residues 1065–1069 carry the VCPWE motif 2 motif; that stretch reads VCPWE. Ser-1074 carries the phosphoserine modification. Residues 1130–1160 are disordered; that stretch reads QMGDQEKQTSSSVDIIPGSCNSSNNSHQPLT. Positions 1165–1169 match the VCPWE motif 3 motif; it reads VCPWE. Positions 1177-1200 are disordered; the sequence is NAERSVTLPASSALSANKIPGPQK. Residues 1178 to 1191 show a composition bias toward polar residues; that stretch reads AERSVTLPASSALS.

The protein belongs to the G-protein coupled receptor 3 family. In terms of assembly, homodimer. Associates with the RGS7-GNB5 complex, promoting its localization to the cell membrane and regulating its GTPase activator activity. Interacts (via VCPWE motifs) with GNAO1. Interacts with GPC4. Interacts with EGFLAM. In terms of tissue distribution, highly expressed in brain. Expressed in several brain regions including the cerebral cortex, hippocampus, cerebellum and caudate putamen. Only expressed in neurons, and not in microglia, oligodendrocytes or astrocytes. Expressed in the visual center of the cerebral cortex. Also expressed in the eye, including photoreceptors, ganglion cells and trabecular meshwork.

The protein resides in the cell membrane. Its subcellular location is the postsynaptic cell membrane. The protein localises to the presynaptic cell membrane. It localises to the nucleus. Its function is as follows. Metabotropic receptor for glycine that controls synapse formation and function in the brain. Acts as an atypical G-protein coupled receptor that recruits and regulates the RGS7-GNB5 complex instead of activating G proteins. In absence of glycine ligand, promotes the GTPase activator activity of RGS7, increasing the GTPase activity of G protein alpha subunits, thereby driving them into their inactive GDP-bound form. Glycine-binding changes the conformation of the intracellular surface, inhibiting the GTPase activator activity of the RGS7-GNB5 complex, promoting G protein alpha subunits into their active GTP-bound form and regulating cAMP levels. Also able to bind taurine, a compound closely related to glycine, but with a two-fold lower affinity. Glycine receptor-dependent regulation of cAMP controls key ion channels, kinases and neurotrophic factors involved in neuronal excitability and synaptic transmission. Plays a pivotal role in regulating mood and cognition via its ability to regulate neuronal excitability in L2/L3 pyramidal neurons of the prefrontal cortex. Also involved in spatial learning by regulating hippocampal CA1 neuronal excitability. Acts as a synaptic organizer in the hippocampus, required for proper mossy fiber-CA3 neurocircuitry establishment, structure and function: induces presynaptic differentiation in contacting axons via its interaction with GPC4. In addition to glycine, may also act as a receptor for osteocalcin (Bglap or Bglap2) hormone: osteocalcin-binding initiates a signaling response that prevents neuronal apoptosis in the hippocampus and regulates the synthesis of neurotransmitters. This Mus musculus (Mouse) protein is Metabotropic glycine receptor.